A 182-amino-acid chain; its full sequence is Regulatory protein RecX (182 aa).

The interval Leu-12–Val-54 is disordered. Positions Ser-13–Arg-24 are enriched in basic and acidic residues. Over residues Ala-43–Val-54 the composition is skewed to polar residues.

This sequence belongs to the RecX family.

The protein resides in the cytoplasm. Functionally, modulates RecA activity. In Yersinia pseudotuberculosis serotype I (strain IP32953), this protein is Regulatory protein RecX.